The chain runs to 536 residues: Adenine deaminase (536 aa).

The segment at 1-24 (MTPSPHDLLHCGMNSQDRDETNGD) is disordered.

The protein belongs to the metallo-dependent hydrolases superfamily. Adenine deaminase family. Mn(2+) serves as cofactor.

It catalyses the reaction adenine + H2O + H(+) = hypoxanthine + NH4(+). This chain is Adenine deaminase, found in Deinococcus radiodurans (strain ATCC 13939 / DSM 20539 / JCM 16871 / CCUG 27074 / LMG 4051 / NBRC 15346 / NCIMB 9279 / VKM B-1422 / R1).